Consider the following 728-residue polypeptide: MMWGTKLLPVLLLQHVLLHLLLLPVTIPYAEGQKKRRNTLHEFKKSAKTTLTKEDPLVKIKTKKVNSADECANRCIRNKGFPFTCKAFVFDKSRKRCYWYPFNSMSSGVKKGFGHEFDLYENKDYIRNCIIGKGGSYKGTVSITKSGIKCQPWNSMIPHEHSFLPSSYRGKDLQENYCRNPRGEEGGPWCFTSNPEVRYEVCDIPQCSEVECMTCNGESYRGPMDHTESGKTCQRWDQQTPHRHKFLPERYPDKGFDDNYCRNPDGKPRPWCYTLDPDTPWEYCAIKMCAHSAVNETDVPMETTECIKGQGEGYRGTTNTIWNGIPCQRWDSQYPHKHDITPENFKCKDLRENYCRNPDGAESPWCFTTDPNIRVGYCSQIPKCDVSSGQDCYRGNGKNYMGNLSKTRSGLTCSMWDKNMEDLHRHIFWEPDASKLTKNYCRNPDDDAHGPWCYTGNPLVPWDYCPISRCEGDTTPTIVNLDHPVISCAKTKQLRVVNGIPTQTTVGWMVSLKYRNKHICGGSLIKESWVLTARQCFPARNKDLKDYEAWLGIHDVHERGEEKRKQILNISQLVYGPEGSDLVLLKLARPAILDNFVSTIDLPSYGCTIPEKTTCSIYGWGYTGLINADGLLRVAHLYIMGNEKCSQHHQGKVTLNESELCAGAEKIGSGPCEGDYGGPLICEQHKMRMVLGVIVPGRGCAIPNRPGIFVRVAYYAKWIHKVILTYKL.

The first 32 residues, 1 to 32 (MMWGTKLLPVLLLQHVLLHLLLLPVTIPYAEG), serve as a signal peptide directing secretion. A Pyrrolidone carboxylic acid modification is found at Gln33. The region spanning 38–124 (NTLHEFKKSA…HEFDLYENKD (87 aa)) is the PAN domain. 8 disulfide bridges follow: Cys71/Cys97, Cys75/Cys85, Cys129/Cys207, Cys150/Cys190, Cys178/Cys202, Cys212/Cys289, Cys233/Cys272, and Cys261/Cys284. Kringle domains lie at 129-207 (CIIG…IPQC) and 212-289 (CMTC…IKMC). N-linked (GlcNAc...) asparagine glycosylation occurs at Asn295. Intrachain disulfides connect Cys306/Cys384, Cys327/Cys366, Cys355/Cys378, Cys392/Cys470, Cys413/Cys453, Cys441/Cys465, Cys488/Cys607, Cys520/Cys536, Cys615/Cys682, Cys645/Cys661, and Cys672/Cys700. 2 consecutive Kringle domains span residues 306–384 (CIKG…IPKC) and 392–470 (CYRG…ISRC). A glycan (N-linked (GlcNAc...) asparagine) is linked at Asn403. Positions 496–724 (VVNGIPTQTT…YAKWIHKVIL (229 aa)) constitute a Peptidase S1 domain. Asn569 and Asn656 each carry an N-linked (GlcNAc...) asparagine glycan.

The protein belongs to the peptidase S1 family. Plasminogen subfamily. In terms of assembly, dimer of an alpha chain and a beta chain linked by a disulfide bond. Interacts with SRPX2; the interaction increases HGF mitogenic activity. Post-translationally, the single-chain precursor undergoes proteolytic processing by TMPRSS13 resulting in an active two-chain form. The single-chain precursor undergoes proteolytic processing by HGFAC resulting in an active two-chain form.

Functionally, potent mitogen for mature parenchymal hepatocyte cells, seems to be a hepatotrophic factor, and acts as a growth factor for a broad spectrum of tissues and cell types. Activating ligand for the receptor tyrosine kinase MET by binding to it and promoting its dimerization. Activates MAPK signaling following TMPRSS13 cleavage and activation. This chain is Hepatocyte growth factor (Hgf), found in Rattus norvegicus (Rat).